The primary structure comprises 86 residues: 4-hydroxyphenylacetate decarboxylase small subunit (86 aa).

His3, Cys6, Cys19, Cys36, Cys45, Cys48, Cys62, and Cys80 together coordinate [4Fe-4S] cluster.

The protein belongs to the HPA decarboxylase small subunit family. Heterooctamer consisting of 4 large (HpdB) subunits and 4 small (HpdC) subunits, arranged as a tetramer of heterodimers. Requires [4Fe-4S] cluster as cofactor.

The enzyme catalyses 4-hydroxyphenylacetate + H(+) = 4-methylphenol + CO2. It carries out the reaction 3,4-dihydroxyphenylacetate + H(+) = 4-methylcatechol + CO2. Its function is as follows. Component of the HPA decarboxylase that decarboxylates phenylacetates with a hydroxyl group in the p-position. Active toward 4-hydroxyphenylacetate and 3,4-dihydroxyphenylacetate, forming 4-methylphenol and 4-methylcatechol, respectively. Is likely involved in the catabolism of aromatic amino acids such as tyrosine fermentation. 4-methylphenol (p-cresol) formation provides metabolic toxicity, which allows an active suppression of other microbes and may provide growth advantages for the producers in highly competitive environments. The small subunit is essential for enzymatic activity of HPA decarboxylase, and also seems to be involved in the regulation of the enzyme oligomeric state and catalytic activity. This is 4-hydroxyphenylacetate decarboxylase small subunit from Clostridium scatologenes.